The primary structure comprises 276 residues: RRP15-like protein (276 aa).

2 disordered regions span residues 1–132 and 201–276; these read MALL…QLRV and KRAK…DGEE. Composition is skewed to basic and acidic residues over residues 75 to 95 and 226 to 245; these read FQKD…KADV and KGSS…DFMT. A compositionally biased stretch (acidic residues) spans 254 to 276; it reads EEDDDEEGHNDEADDSDYDDGEE. Ser-269 carries the phosphoserine modification. Tyr-271 bears the Phosphotyrosine mark.

The protein belongs to the RRP15 family.

This chain is RRP15-like protein, found in Drosophila melanogaster (Fruit fly).